Consider the following 101-residue polypeptide: Small ribosomal subunit protein uS14 (101 aa).

Belongs to the universal ribosomal protein uS14 family. In terms of assembly, part of the 30S ribosomal subunit. Contacts proteins S3 and S10.

Its function is as follows. Binds 16S rRNA, required for the assembly of 30S particles and may also be responsible for determining the conformation of the 16S rRNA at the A site. This Ruegeria pomeroyi (strain ATCC 700808 / DSM 15171 / DSS-3) (Silicibacter pomeroyi) protein is Small ribosomal subunit protein uS14.